A 189-amino-acid chain; its full sequence is GTPase KRas (189 aa).

At Met1 the chain carries N-acetylmethionine. Thr2 bears the N-acetylthreonine; in GTPase KRas, N-terminally processed mark. Residues 10-18 (GAGGVGKSA), 29-35 (VDEYDPT), and 59-60 (AG) contribute to the GTP site. The Effector region motif lies at 32–40 (YDPTIEDSY). Position 104 is an N6-acetyllysine (Lys104). 116–119 (NKCD) is a GTP binding site. Positions 166 to 185 (YRLKKISKEEKTPGCVKIKK) are hypervariable region. Lys170 participates in a covalent cross-link: Glycyl lysine isopeptide (Lys-Gly) (interchain with G-Cter in ubiquitin). Residue Cys180 is the site of S-palmitoyl cysteine attachment. Residues Lys182, Lys184, and Lys185 are each lipidated (N6-palmitoyl lysine). Cysteine methyl ester is present on Cys186. The S-farnesyl cysteine moiety is linked to residue Cys186. Residues 187 to 189 (VIM) constitute a propeptide, removed in mature form.

Belongs to the small GTPase superfamily. Ras family. Interacts with PHLPP. Interacts (active GTP-bound form preferentially) with RGS14. Interacts (when farnesylated) with PDE6D; this promotes dissociation from the cell membrane. Interacts with SOS1. Interacts (when farnesylated) with GPR31. Interacts with RAP1GDS1. Interacts (active GTP-bound form) with both SHOC2 and PP1c (all isoforms) to form a tertiary complex; SHOC2 and PP1c preferably bind M-Ras/MRAS, but they also bind K-Ras/KRAS, N-Ras/NRAS and H-Ras/HRAS. Interacts (GTP-bound form) with MAPKAP1/SIN1; inhibiting K-Ras/KRAS activity. In terms of assembly, interacts (when farnesylated) with GPR31. Post-translationally, acetylation at Lys-104 prevents interaction with guanine nucleotide exchange factors (GEFs). Ubiquitinated by the BCR(LZTR1) E3 ubiquitin ligase complex at Lys-170 in a non-degradative manner, leading to inhibit Ras signaling by decreasing Ras association with membranes. In terms of processing, palmitoylated at Lys-182, Lys-184 and Lys-185. Lysine-depalmitoylation by SIRT2 promotes its localization to endomembranes in endocytic pathways.

It localises to the cell membrane. Its subcellular location is the endomembrane system. It is found in the cytoplasm. The protein resides in the cytosol. The enzyme catalyses GTP + H2O = GDP + phosphate + H(+). Its activity is regulated as follows. Alternates between an inactive form bound to GDP and an active form bound to GTP. Activated by a guanine nucleotide-exchange factor (GEF) and inactivated by a GTPase-activating protein (GAP). Interaction with SOS1 promotes exchange of bound GDP to GTP. Functionally, ras proteins bind GDP/GTP and possess intrinsic GTPase activity. Plays an important role in the regulation of cell proliferation. Plays a role in promoting oncogenic events by inducing transcriptional silencing of tumor suppressor genes (TSGs) in colorectal cancer (CRC) cells in a ZNF304-dependent manner. In Rattus norvegicus (Rat), this protein is GTPase KRas (Kras).